Here is a 179-residue protein sequence, read N- to C-terminus: Exosome complex component Csl4 (179 aa).

The S1 motif domain maps to 58–137 (GDVVLGRVVD…RLSTKEEEMG (80 aa)). 4 residues coordinate Zn(2+): C143, C146, C159, and C162.

Belongs to the CSL4 family. Component of the archaeal exosome complex. Forms a trimer of Rrp4 and/or Csl4 subunits. The trimer associates with a hexameric ring-like arrangement composed of 3 Rrp41-Rrp42 heterodimers. Interacts with DnaG.

It is found in the cytoplasm. Non-catalytic component of the exosome, which is a complex involved in RNA degradation. Increases the RNA binding and the efficiency of RNA degradation. Helpful for the interaction of the exosome with A-poor RNAs. The sequence is that of Exosome complex component Csl4 from Archaeoglobus fulgidus (strain ATCC 49558 / DSM 4304 / JCM 9628 / NBRC 100126 / VC-16).